A 306-amino-acid polypeptide reads, in one-letter code: Acetyl-coenzyme A carboxylase carboxyl transferase subunit beta (306 aa).

Residues 27–296 form the CoA carboxyltransferase N-terminal domain; that stretch reads LWHKCPSCEA…PRFVAPVIEP (270 aa). 4 residues coordinate Zn(2+): C31, C34, C50, and C53. The C4-type zinc-finger motif lies at 31–53; sequence CPSCEAVLYRPELEKTLDVCPKC.

This sequence belongs to the AccD/PCCB family. As to quaternary structure, acetyl-CoA carboxylase is a heterohexamer composed of biotin carboxyl carrier protein (AccB), biotin carboxylase (AccC) and two subunits each of ACCase subunit alpha (AccA) and ACCase subunit beta (AccD). It depends on Zn(2+) as a cofactor.

It localises to the cytoplasm. The catalysed reaction is N(6)-carboxybiotinyl-L-lysyl-[protein] + acetyl-CoA = N(6)-biotinyl-L-lysyl-[protein] + malonyl-CoA. It participates in lipid metabolism; malonyl-CoA biosynthesis; malonyl-CoA from acetyl-CoA: step 1/1. Component of the acetyl coenzyme A carboxylase (ACC) complex. Biotin carboxylase (BC) catalyzes the carboxylation of biotin on its carrier protein (BCCP) and then the CO(2) group is transferred by the transcarboxylase to acetyl-CoA to form malonyl-CoA. In Pseudomonas savastanoi pv. phaseolicola (strain 1448A / Race 6) (Pseudomonas syringae pv. phaseolicola (strain 1448A / Race 6)), this protein is Acetyl-coenzyme A carboxylase carboxyl transferase subunit beta.